A 252-amino-acid chain; its full sequence is Trans-aconitate 2-methyltransferase (252 aa).

The protein belongs to the methyltransferase superfamily. Tam family.

It is found in the cytoplasm. It catalyses the reaction trans-aconitate + S-adenosyl-L-methionine = (E)-3-(methoxycarbonyl)pent-2-enedioate + S-adenosyl-L-homocysteine. Its function is as follows. Catalyzes the S-adenosylmethionine monomethyl esterification of trans-aconitate. The protein is Trans-aconitate 2-methyltransferase of Escherichia fergusonii (strain ATCC 35469 / DSM 13698 / CCUG 18766 / IAM 14443 / JCM 21226 / LMG 7866 / NBRC 102419 / NCTC 12128 / CDC 0568-73).